Consider the following 314-residue polypeptide: tRNA pseudouridine synthase B (314 aa).

A substrate-binding site is contributed by His43. Asp48 (nucleophile) is an active-site residue. Tyr76, Tyr179, and Leu200 together coordinate substrate.

It belongs to the pseudouridine synthase TruB family. Type 1 subfamily.

The catalysed reaction is uridine(55) in tRNA = pseudouridine(55) in tRNA. In terms of biological role, responsible for synthesis of pseudouridine from uracil-55 in the psi GC loop of transfer RNAs. The chain is tRNA pseudouridine synthase B from Pectobacterium atrosepticum (strain SCRI 1043 / ATCC BAA-672) (Erwinia carotovora subsp. atroseptica).